The following is a 430-amino-acid chain: Signal recognition particle receptor FtsY (430 aa).

The interval 75 to 95 is disordered; it reads DTGELPAVGDDATVPRDSPRH. Residues 238–245, 320–324, and 382–385 contribute to the GTP site; these read GVNGTGKT, DTAGR, and TKLD.

This sequence belongs to the GTP-binding SRP family. FtsY subfamily. As to quaternary structure, part of the signal recognition particle protein translocation system, which is composed of SRP and FtsY.

The protein resides in the cell membrane. Its subcellular location is the cytoplasm. The catalysed reaction is GTP + H2O = GDP + phosphate + H(+). Its function is as follows. Involved in targeting and insertion of nascent membrane proteins into the cytoplasmic membrane. Acts as a receptor for the complex formed by the signal recognition particle (SRP) and the ribosome-nascent chain (RNC). This Mycobacterium leprae (strain TN) protein is Signal recognition particle receptor FtsY.